The following is a 307-amino-acid chain: DNA damage tolerance protein rad31 (307 aa).

In terms of biological role, could be involved in a ubiquitin-related process important for DNA damage tolerance. Acts in a process which is defective in the checkpoint rad mutants and which involves hus5. The protein is DNA damage tolerance protein rad31 (rad31) of Schizosaccharomyces pombe (strain 972 / ATCC 24843) (Fission yeast).